Reading from the N-terminus, the 201-residue chain is ATP-dependent Clp protease proteolytic subunit (201 aa).

Residue S100 is the Nucleophile of the active site. The active site involves H125.

This sequence belongs to the peptidase S14 family. In terms of assembly, component of the chloroplastic Clp protease core complex.

Its subcellular location is the plastid. The protein resides in the chloroplast stroma. It carries out the reaction Hydrolysis of proteins to small peptides in the presence of ATP and magnesium. alpha-casein is the usual test substrate. In the absence of ATP, only oligopeptides shorter than five residues are hydrolyzed (such as succinyl-Leu-Tyr-|-NHMec, and Leu-Tyr-Leu-|-Tyr-Trp, in which cleavage of the -Tyr-|-Leu- and -Tyr-|-Trp bonds also occurs).. Its function is as follows. Cleaves peptides in various proteins in a process that requires ATP hydrolysis. Has a chymotrypsin-like activity. Plays a major role in the degradation of misfolded proteins. This chain is ATP-dependent Clp protease proteolytic subunit, found in Ranunculus macranthus (Large buttercup).